The primary structure comprises 149 residues: D-aminoacyl-tRNA deacylase (149 aa).

Positions 137-138 (GP) match the Gly-cisPro motif, important for rejection of L-amino acids motif.

It belongs to the DTD family. Homodimer.

Its subcellular location is the cytoplasm. The catalysed reaction is glycyl-tRNA(Ala) + H2O = tRNA(Ala) + glycine + H(+). It catalyses the reaction a D-aminoacyl-tRNA + H2O = a tRNA + a D-alpha-amino acid + H(+). In terms of biological role, an aminoacyl-tRNA editing enzyme that deacylates mischarged D-aminoacyl-tRNAs. Also deacylates mischarged glycyl-tRNA(Ala), protecting cells against glycine mischarging by AlaRS. Acts via tRNA-based rather than protein-based catalysis; rejects L-amino acids rather than detecting D-amino acids in the active site. By recycling D-aminoacyl-tRNA to D-amino acids and free tRNA molecules, this enzyme counteracts the toxicity associated with the formation of D-aminoacyl-tRNA entities in vivo and helps enforce protein L-homochirality. The sequence is that of D-aminoacyl-tRNA deacylase from Syntrophobacter fumaroxidans (strain DSM 10017 / MPOB).